The following is a 127-amino-acid chain: Protein ApaG (127 aa).

Residues 3-127 (EGKKYQINIS…FTLAMPRVLH (125 aa)) enclose the ApaG domain.

The chain is Protein ApaG from Thiobacillus denitrificans (strain ATCC 25259 / T1).